The following is a 219-amino-acid chain: Small ribosomal subunit protein uS3 (219 aa).

A KH type-2 domain is found at 38-106 (IRKYINTKLA…KVHINIVEIK (69 aa)).

It belongs to the universal ribosomal protein uS3 family. As to quaternary structure, part of the 30S ribosomal subunit. Forms a tight complex with proteins S10 and S14.

Binds the lower part of the 30S subunit head. Binds mRNA in the 70S ribosome, positioning it for translation. In Latilactobacillus sakei subsp. sakei (strain 23K) (Lactobacillus sakei subsp. sakei), this protein is Small ribosomal subunit protein uS3.